A 233-amino-acid polypeptide reads, in one-letter code: Thrombin-like enzyme elegaxobin-2 (233 aa).

The Peptidase S1 domain maps to 1 to 224 (VIGGDECNIN…HLDWIKGIIA (224 aa)). 6 cysteine pairs are disulfide-bonded: Cys-7/Cys-138, Cys-25/Cys-41, Cys-73/Cys-231, Cys-117/Cys-185, Cys-149/Cys-164, and Cys-175/Cys-200. Catalysis depends on His-40, which acts as the Charge relay system. Asn-78 carries an N-linked (GlcNAc...) asparagine glycan. Residue Asp-85 is the Charge relay system of the active site. Ser-179 (charge relay system) is an active-site residue.

The protein belongs to the peptidase S1 family. Snake venom subfamily. As to quaternary structure, monomer. As to expression, expressed by the venom gland.

It localises to the secreted. Functionally, thrombin-like snake venom serine protease that clots rabbit fibrinogen. Only the beta chain of fibrinogen (FGB) is cleaved, releasing fibrinopeptide B. Human and bovine fibrinogen are unaffected. Also cleaves Met-Lys and Arg-Ser bonds in heat-denatured bovine plasma kininogen to release Lys-bradykinin. The sequence is that of Thrombin-like enzyme elegaxobin-2 from Protobothrops elegans (Elegant pitviper).